A 126-amino-acid polypeptide reads, in one-letter code: Small ribosomal subunit protein uS12 (126 aa).

Residues 1–28 (MPTINQLVRKGRRKVRTKSKSPALDGNP) are disordered. The segment covering 9–19 (RKGRRKVRTKS) has biased composition (basic residues). Residue Asp89 is modified to 3-methylthioaspartic acid. The tract at residues 106-126 (GVEKRRRSRSKYGVKRPKAAK) is disordered. The span at 109-126 (KRRRSRSKYGVKRPKAAK) shows a compositional bias: basic residues.

It belongs to the universal ribosomal protein uS12 family. In terms of assembly, part of the 30S ribosomal subunit. Contacts proteins S8 and S17. May interact with IF1 in the 30S initiation complex.

In terms of biological role, with S4 and S5 plays an important role in translational accuracy. Functionally, interacts with and stabilizes bases of the 16S rRNA that are involved in tRNA selection in the A site and with the mRNA backbone. Located at the interface of the 30S and 50S subunits, it traverses the body of the 30S subunit contacting proteins on the other side and probably holding the rRNA structure together. The combined cluster of proteins S8, S12 and S17 appears to hold together the shoulder and platform of the 30S subunit. The protein is Small ribosomal subunit protein uS12 of Opitutus terrae (strain DSM 11246 / JCM 15787 / PB90-1).